Reading from the N-terminus, the 513-residue chain is GMP synthase [glutamine-hydrolyzing] (513 aa).

A Glutamine amidotransferase type-1 domain is found at 8-198 (MILVLDFGSQ…VFGVCDCDGK (191 aa)). Cysteine 85 (nucleophile) is an active-site residue. Residues histidine 172 and glutamate 174 contribute to the active site. The GMPS ATP-PPase domain occupies 199–388 (WSMENFIEIE…LGIPDDIVWR (190 aa)). Residue 226–232 (SGGVDSS) coordinates ATP.

Homodimer.

The enzyme catalyses XMP + L-glutamine + ATP + H2O = GMP + L-glutamate + AMP + diphosphate + 2 H(+). Its pathway is purine metabolism; GMP biosynthesis; GMP from XMP (L-Gln route): step 1/1. Its function is as follows. Catalyzes the synthesis of GMP from XMP. The sequence is that of GMP synthase [glutamine-hydrolyzing] from Bacillus pumilus (strain SAFR-032).